Consider the following 171-residue polypeptide: Crossover junction endodeoxyribonuclease RuvC (171 aa).

Catalysis depends on residues Asp-7, Glu-66, and Asp-138. Positions 7, 66, and 138 each coordinate Mg(2+).

This sequence belongs to the RuvC family. In terms of assembly, homodimer which binds Holliday junction (HJ) DNA. The HJ becomes 2-fold symmetrical on binding to RuvC with unstacked arms; it has a different conformation from HJ DNA in complex with RuvA. In the full resolvosome a probable DNA-RuvA(4)-RuvB(12)-RuvC(2) complex forms which resolves the HJ. The cofactor is Mg(2+).

It localises to the cytoplasm. It catalyses the reaction Endonucleolytic cleavage at a junction such as a reciprocal single-stranded crossover between two homologous DNA duplexes (Holliday junction).. In terms of biological role, the RuvA-RuvB-RuvC complex processes Holliday junction (HJ) DNA during genetic recombination and DNA repair. Endonuclease that resolves HJ intermediates. Cleaves cruciform DNA by making single-stranded nicks across the HJ at symmetrical positions within the homologous arms, yielding a 5'-phosphate and a 3'-hydroxyl group; requires a central core of homology in the junction. The consensus cleavage sequence is 5'-(A/T)TT(C/G)-3'. Cleavage occurs on the 3'-side of the TT dinucleotide at the point of strand exchange. HJ branch migration catalyzed by RuvA-RuvB allows RuvC to scan DNA until it finds its consensus sequence, where it cleaves and resolves the cruciform DNA. The protein is Crossover junction endodeoxyribonuclease RuvC of Francisella tularensis subsp. holarctica (strain FTNF002-00 / FTA).